We begin with the raw amino-acid sequence, 443 residues long: UDP-N-acetylmuramate--L-alanine ligase (443 aa).

110-116 serves as a coordination point for ATP; the sequence is GAHGKTS.

It belongs to the MurCDEF family.

The protein resides in the cytoplasm. The catalysed reaction is UDP-N-acetyl-alpha-D-muramate + L-alanine + ATP = UDP-N-acetyl-alpha-D-muramoyl-L-alanine + ADP + phosphate + H(+). It participates in cell wall biogenesis; peptidoglycan biosynthesis. Its function is as follows. Cell wall formation. This is UDP-N-acetylmuramate--L-alanine ligase from Streptococcus agalactiae serotype V (strain ATCC BAA-611 / 2603 V/R).